The chain runs to 379 residues: Homoserine O-succinyltransferase (379 aa).

In terms of domain architecture, AB hydrolase-1 spans 51–360 (NAVLICHALS…DAPQGHDAFL (310 aa)). Catalysis depends on S157, which acts as the Nucleophile. R227 lines the substrate pocket. Catalysis depends on residues D323 and H356. D357 serves as a coordination point for substrate.

It belongs to the AB hydrolase superfamily. MetX family. Homodimer.

It is found in the cytoplasm. The enzyme catalyses L-homoserine + succinyl-CoA = O-succinyl-L-homoserine + CoA. It participates in amino-acid biosynthesis; L-methionine biosynthesis via de novo pathway; O-succinyl-L-homoserine from L-homoserine: step 1/1. In terms of biological role, transfers a succinyl group from succinyl-CoA to L-homoserine, forming succinyl-L-homoserine. The sequence is that of Homoserine O-succinyltransferase from Pseudomonas fluorescens (strain ATCC BAA-477 / NRRL B-23932 / Pf-5).